The chain runs to 66 residues: Surface composition regulator (66 aa).

The protein belongs to the GlgS family.

Functionally, major determinant of cell surface composition. Negatively regulates motility, adhesion and synthesis of biofilm exopolysaccharides. The chain is Surface composition regulator from Escherichia coli O139:H28 (strain E24377A / ETEC).